The sequence spans 146 residues: VHLTAEEKSAVTALWGKVNVDEVGGEALGRLLVVYPWTQRFFDSFGDLSSPNAIMSNPKVKAHGKKVLNSFSDGLKNLDNLKGTFAKLSELHCDQLHVDPENFKLLGNVLVCVLAHHFGKEFTPQVQAAYQKVVAGVANALAHKYH.

Val-1 carries the N-acetylvaline modification. A Globin domain is found at His-2–His-146. A Phosphothreonine modification is found at Thr-12. Ser-44 is modified (phosphoserine). The residue at position 59 (Lys-59) is an N6-acetyllysine. Residue His-63 coordinates heme b. Lys-82 carries the N6-acetyllysine modification. A heme b-binding site is contributed by His-92. Position 93 is an S-nitrosocysteine (Cys-93). Lys-144 carries the post-translational modification N6-acetyllysine.

The protein belongs to the globin family. Heterotetramer of two alpha chains and two beta chains. In terms of tissue distribution, red blood cells.

Its function is as follows. Involved in oxygen transport from the lung to the various peripheral tissues. This is Hemoglobin subunit beta (HBB) from Leptonychotes weddellii (Weddell seal).